Consider the following 230-residue polypeptide: Androgen-dependent TFPI-regulating protein (230 aa).

Over 1–7 (MTKTTTC) the chain is Cytoplasmic. The chain crosses the membrane as a helical span at residues 8–28 (VYHFLVLNWYIFLNYHIPQIG). Topologically, residues 29-45 (RNEEKLREFHDGGRSKY) are extracellular. The chain crosses the membrane as a helical span at residues 46–66 (LTLLNLLLQAIFFGVACLDDV). Topologically, residues 67–85 (LKRVIGRKDIKFVTSFRDL) are cytoplasmic. A helical transmembrane segment spans residues 86-106 (LFTTMAFPISTFVFLVFWTLF). At 107–120 (HYDRSLVYPKGLDD) the chain is on the extracellular side. Residues 121–141 (FFPAWVNHAMHTSIFPFSLFE) traverse the membrane as a helical segment. Over 142 to 154 (TILRPHNYPSKKL) the chain is Cytoplasmic. A helical membrane pass occupies residues 155 to 175 (GLTLLGAFNFAYIIRILWRYV). The Extracellular segment spans residues 176 to 190 (QTGNWVYPVFDSLSP). The helical transmembrane segment at 191–211 (LGIIIFFSAAYILVAGIYLFG) threads the bilayer. Residues 212–230 (EKINHWKWGAIAKPQMKKN) lie on the Cytoplasmic side of the membrane.

It belongs to the AIG1 family.

It localises to the cell membrane. It carries out the reaction 9-hexadecanoyloxy-octadecanoate + H2O = 9-hydroxy-octadecanoate + hexadecanoate + H(+). The enzyme catalyses 12-hexadecanoyloxy-octadecanoate + H2O = 12-hydroxyoctadecanoate + hexadecanoate + H(+). It catalyses the reaction 9-(9Z-hexadecenoyloxy)-octadecanoate + H2O = (9Z)-hexadecenoate + 9-hydroxy-octadecanoate + H(+). The catalysed reaction is 12-(9Z-hexadecenoyloxy)-octadecanoate + H2O = 12-hydroxyoctadecanoate + (9Z)-hexadecenoate + H(+). It carries out the reaction 13-(9Z-hexadecenoyloxy)-octadecanoate + H2O = 13-hydroxy-octadecanoate + (9Z)-hexadecenoate + H(+). The enzyme catalyses 9-octadecanoyloxy-octadecanoate + H2O = 9-hydroxy-octadecanoate + octadecanoate + H(+). It catalyses the reaction 12-octadecanoyloxy-octadecanoate + H2O = 12-hydroxyoctadecanoate + octadecanoate + H(+). The catalysed reaction is 13-octadecanoyloxy-octadecanoate + H2O = 13-hydroxy-octadecanoate + octadecanoate + H(+). It carries out the reaction 9-(9Z-octadecenoyloxy)-octadecanoate + H2O = 9-hydroxy-octadecanoate + (9Z)-octadecenoate + H(+). The enzyme catalyses 12-(9Z-octadecenoyloxy)-octadecanoate + H2O = 12-hydroxyoctadecanoate + (9Z)-octadecenoate + H(+). It catalyses the reaction 13-(9Z-octadecenoyloxy)-octadecanoate + H2O = 13-hydroxy-octadecanoate + (9Z)-octadecenoate + H(+). The catalysed reaction is 5-(9Z-octadecenoyloxy)-octadecanoate + H2O = 5-hydroxy-octadecanoate + (9Z)-octadecenoate + H(+). Hydrolyzes bioactive fatty-acid esters of hydroxy-fatty acids (FAHFAs), but not other major classes of lipids. Shows a preference for FAHFAs with branching distal from the carboxylate head group of the lipids. Regulates the expression and the cell-associated anticoagulant activity of the inhibitor TFPI in endothelial cells (in vitro). The protein is Androgen-dependent TFPI-regulating protein (Adtrp) of Mus musculus (Mouse).